The following is a 351-amino-acid chain: MTQAWWRDACQPLDNAAMDQARARQQQLTKPAGSLGQLEALAIQLAGLQGLERPTLDQVAITIFAGDHGVVEEGISAYPQAVTGQMLRNFVGGGAAISVLARQLQASLDVVDLGTIDAQLELPGVRHLRLGTGTANFARQPAMTENQLQAALQAGRDSAQRAAEQGAQLFIGGEMGIGNTTAAAALASVLLGCPASELSGPGTGLDNAGVQHKAEVIERALRLHGLRAEDPLQALACVGGFEIAALAGAYLGCAQAGVTVLVDGFICSVAALVAVRLNPQCRAWLLFAHQGAEPGHKTLLAALQAEPLLALGLRLGEGSGAALAVPLLRLACALHGQMATFAEAAVADRPA.

E317 serves as the catalytic Proton acceptor.

Belongs to the CobT family.

The catalysed reaction is 5,6-dimethylbenzimidazole + nicotinate beta-D-ribonucleotide = alpha-ribazole 5'-phosphate + nicotinate + H(+). The protein operates within nucleoside biosynthesis; alpha-ribazole biosynthesis; alpha-ribazole from 5,6-dimethylbenzimidazole: step 1/2. In terms of biological role, catalyzes the synthesis of alpha-ribazole-5'-phosphate from nicotinate mononucleotide (NAMN) and 5,6-dimethylbenzimidazole (DMB). The sequence is that of Nicotinate-nucleotide--dimethylbenzimidazole phosphoribosyltransferase from Pseudomonas putida (strain ATCC 47054 / DSM 6125 / CFBP 8728 / NCIMB 11950 / KT2440).